We begin with the raw amino-acid sequence, 367 residues long: Serine/threonine-protein kinase-transforming protein Rmil (367 aa).

Residues 1-64 (EGGSTAGLSA…DSSDDWEIPD (64 aa)) form a disordered region. Residues 33 to 57 (QRERKSSSSSEDRNRMKTLGRRDSS) are compositionally biased toward basic and acidic residues. Positions 67–327 (ITVGQRIGSG…PQILASIELL (261 aa)) constitute a Protein kinase domain. Residues 73–81 (IGSGSFGTV) and lysine 93 each bind ATP. Aspartate 186 serves as the catalytic Proton acceptor.

It belongs to the protein kinase superfamily. TKL Ser/Thr protein kinase family. RAF subfamily.

The catalysed reaction is L-seryl-[protein] + ATP = O-phospho-L-seryl-[protein] + ADP + H(+). It catalyses the reaction L-threonyl-[protein] + ATP = O-phospho-L-threonyl-[protein] + ADP + H(+). The polypeptide is Serine/threonine-protein kinase-transforming protein Rmil (V-RMIL) (Avian retrovirus IC10).